The chain runs to 819 residues: Lysine-specific demethylase JMJ18 (819 aa).

Positions 1–39 (MENPPLESEIKEDMSLKNHPPDKDKDKDTIMEQPSSPRH) are disordered. The segment covering 8–30 (SEIKEDMSLKNHPPDKDKDKDTI) has biased composition (basic and acidic residues). The JmjN domain maps to 59–100 (APVFTPSLEEFVDPLAYIEKIRPLAEPYGICRIIPPSTWKPP). The interval 120-171 (TVDLLQNREPMKKKPKSRKRKRRRNSRMGSSKRRSGSSPAESTSSPEAEEKF) is disordered. The short motif at 130–137 (MKKKPKSR) is the Nuclear localization signal element. Basic residues predominate over residues 130–154 (MKKKPKSRKRKRRRNSRMGSSKRRS). The span at 155 to 165 (GSSPAESTSSP) shows a compositional bias: low complexity. The region spanning 261 to 427 (QYTLSGWNLN…HGQNAVELYS (167 aa)) is the JmjC domain. Fe cation-binding residues include histidine 307, glutamate 309, and histidine 395. The Zn(2+) site is built by cysteine 519, cysteine 522, cysteine 533, cysteine 535, cysteine 542, histidine 545, cysteine 550, and cysteine 552. The C5HC2 zinc finger occupies 519–571 (CFSCFYDLHLSASGCKCSPEEYACLKHADDLCSCDVKDGFILLRYTMDELSSL). Residues 644-702 (ASENLGVSVEPINLGFLIFGKLWCNKYAIFPKGFRSRVKFYNVLDPTRMSNYISEVLDA) form the FYR N-terminal domain. One can recognise an FYR C-terminal domain in the interval 704–788 (LMGPLFRVTL…HRLVEYWNHK (85 aa)).

Belongs to the JARID1 histone demethylase family. Fe(2+) serves as cofactor. Expressed in vascular tissues of roots, cotyledons, leaves and flowers. Expressed predominantly in phloem companion cells of roots. Present in inflorescences, roots, siliques, leaves and stems.

Its subcellular location is the nucleus. The enzyme catalyses N(6),N(6),N(6)-trimethyl-L-lysyl(4)-[histone H3] + 2-oxoglutarate + O2 = N(6),N(6)-dimethyl-L-lysyl(4)-[histone H3] + formaldehyde + succinate + CO2. It catalyses the reaction N(6),N(6)-dimethyl-L-lysyl(4)-[histone H3] + 2-oxoglutarate + O2 = N(6)-methyl-L-lysyl(4)-[histone H3] + formaldehyde + succinate + CO2. Histone demethylase that demethylates 'Lys-4' (H3K4me) of histone H3 with a specific activity for H3K4me3 and H3K4me2. No activity on H3K9me3/2, H3K27me3/2 and H3K36me3/2. Involved in the control of flowering time by demethylating H3K4me3 at the FLC locus and repressing its expression. The repression of FLC level and reduction in H3K4me3 at the FLC locus results in induction of the flowering activator FT, which is a downstream target of FLC. This is Lysine-specific demethylase JMJ18 from Arabidopsis thaliana (Mouse-ear cress).